We begin with the raw amino-acid sequence, 142 residues long: MVLSAADKTNVKGVFSKIGGHAEEYGAETLERMFIAYPQTKTYFPHFDLSHGSAQIKAHGKKVAAALVEAVNHVDDIAGALSKLSDLHAQKLRVDPVNFKFLGHCFLVVVAIHHPAALTPEVHASLDKFMCAVGAVLTAKYR.

The Globin domain maps to 2–142 (VLSAADKTNV…VGAVLTAKYR (141 aa)). An O2-binding site is contributed by His59. His88 serves as a coordination point for heme b.

It belongs to the globin family. Heterotetramer of two alpha chains and two beta chains. In terms of tissue distribution, red blood cells.

In terms of biological role, involved in oxygen transport from the lung to the various peripheral tissues. The sequence is that of Hemoglobin subunit alpha-A (HBAA) from Anas platyrhynchos (Mallard).